Consider the following 200-residue polypeptide: Guanylyl cyclase-activating protein 2 (200 aa).

The N-myristoyl glycine moiety is linked to residue Gly2. EF-hand domains follow at residues 14-31 (GEID…FVME), 53-88 (EASQ…VLRG), 89-124 (TLEH…IYQL), and 141-176 (TPEE…DKWV). Residues Asp66, Asn68, Asp70, Thr72, Glu77, Asp102, Asp104, Asn106, Cys108, Glu113, Asp154, Asn156, Asp158, Gln160, and Glu165 each contribute to the Ca(2+) site.

Post-translationally, the N-terminus is blocked. As to expression, in the retina, it is expressed in cone and rod photoreceptor cells.

The protein localises to the cell membrane. The protein resides in the photoreceptor inner segment. It localises to the cell projection. Its subcellular location is the cilium. It is found in the photoreceptor outer segment. Functionally, stimulates two retinal guanylyl cyclases (GCs) GUCY2D and GUCY2F when free calcium ions concentration is low, and inhibits GUCY2D and GUCY2F when free calcium ions concentration is elevated. This Ca(2+)-sensitive regulation of GCs is a key event in recovery of the dark state of rod photoreceptors following light exposure. May be involved in cone photoreceptor response and recovery of response in bright light. The protein is Guanylyl cyclase-activating protein 2 (GUCA1B) of Homo sapiens (Human).